The sequence spans 280 residues: Ribosomal RNA large subunit methyltransferase J (280 aa).

S-adenosyl-L-methionine contacts are provided by residues His19, His42, Ser100, Glu118, 143–144 (DG), and Asp164. The active-site Proton acceptor is Asp164.

The protein belongs to the RlmJ family. Monomer.

It catalyses the reaction adenosine(2030) in 23S rRNA + S-adenosyl-L-methionine = N(6)-methyladenosine(2030) in 23S rRNA + S-adenosyl-L-homocysteine + H(+). Its function is as follows. Specifically methylates the adenine in position 2030 of 23S rRNA. Nascent 23S rRNA seems to be the natural substrate. Appears to be not necessary for ribosome assembly. Required for the utilization of extracellular DNA as the sole source of carbon and energy. This chain is Ribosomal RNA large subunit methyltransferase J, found in Escherichia coli (strain K12).